The primary structure comprises 260 residues: uncharacterized protein (260 aa).

This is an uncharacterized protein from Caenorhabditis elegans.